The following is a 155-amino-acid chain: Small ribosomal subunit protein uS7c (155 aa).

The protein belongs to the universal ribosomal protein uS7 family. Part of the 30S ribosomal subunit.

Its subcellular location is the plastid. The protein resides in the chloroplast. One of the primary rRNA binding proteins, it binds directly to 16S rRNA where it nucleates assembly of the head domain of the 30S subunit. This is Small ribosomal subunit protein uS7c (rps7) from Cornus mas (Cornelian cherry dogwood).